A 348-amino-acid chain; its full sequence is Centromere protein L (348 aa).

It belongs to the CENP-L/IML3 family.

The protein resides in the nucleus. It is found in the chromosome. The protein localises to the centromere. Functionally, probable component of a centromeric complex involved in assembly of kinetochore proteins, mitotic progression and chromosome segregation. This Xenopus tropicalis (Western clawed frog) protein is Centromere protein L (cenpl).